We begin with the raw amino-acid sequence, 150 residues long: METVFDINEIMKILPHRYPFLLVDRIVEHVPGERIVGIKNVTINEPFFQGHFPGHPIMPGVLIVEAMAQVGGILAYMASDDEVRNKVCYFASIDNVKFRKPVLPGDQLRIEVAATGCKRGIWCFSAKAIVKGKVTTQAELKATFADKDRL.

Residue histidine 51 is part of the active site.

This sequence belongs to the thioester dehydratase family. FabZ subfamily.

The protein resides in the cytoplasm. The catalysed reaction is a (3R)-hydroxyacyl-[ACP] = a (2E)-enoyl-[ACP] + H2O. Involved in unsaturated fatty acids biosynthesis. Catalyzes the dehydration of short chain beta-hydroxyacyl-ACPs and long chain saturated and unsaturated beta-hydroxyacyl-ACPs. The polypeptide is 3-hydroxyacyl-[acyl-carrier-protein] dehydratase FabZ (Geobacter metallireducens (strain ATCC 53774 / DSM 7210 / GS-15)).